A 170-amino-acid polypeptide reads, in one-letter code: Mediator of RNA polymerase II transcription subunit 10 (170 aa).

This sequence belongs to the Mediator complex subunit 10 family. Component of the Mediator complex.

It localises to the nucleus. Component of the Mediator complex, a coactivator involved in the regulated transcription of nearly all RNA polymerase II-dependent genes. Mediator functions as a bridge to convey information from gene-specific regulatory proteins to the basal RNA polymerase II transcription machinery. Mediator is recruited to promoters by direct interactions with regulatory proteins and serves as a scaffold for the assembly of a functional preinitiation complex with RNA polymerase II and the general transcription factors. The chain is Mediator of RNA polymerase II transcription subunit 10 (NUT2) from Candida albicans (strain SC5314 / ATCC MYA-2876) (Yeast).